A 198-amino-acid chain; its full sequence is MSTEISAAAPRRAANGKKRANRRKKRRTQAESDSSDSSDSSESSQPSADEQEAKTDDVAVELSDVELSDSENKTVSHSEKLDDESKAKLKSIQLTATDLSSKFALQQNRNIDLQKAGREVDHGLEKLAKLDAQTSEQESGRLKTGYINMLFEHVGEDVNQLRNAPDFTPKSLVVLANALKDGGDMFDIESLRALVDNK.

The tract at residues 1–84 is disordered; the sequence is MSTEISAAAP…VSHSEKLDDE (84 aa). Residues 14 to 27 are compositionally biased toward basic residues; it reads ANGKKRANRRKKRR. The span at 31–48 shows a compositional bias: low complexity; sequence ESDSSDSSDSSESSQPSA. Residues 70–84 are compositionally biased toward basic and acidic residues; that stretch reads SENKTVSHSEKLDDE.

Belongs to the RSA3 family. In terms of assembly, associates with nucleolar pre-ribosomal particles.

Its subcellular location is the nucleus. It is found in the nucleolus. Required for efficient biogenesis of the 60S ribosomal subunit. The polypeptide is Ribosome assembly protein 3 (RSA3) (Eremothecium gossypii (strain ATCC 10895 / CBS 109.51 / FGSC 9923 / NRRL Y-1056) (Yeast)).